The sequence spans 455 residues: Beta-1,3-galactosyl-O-glycosyl-glycoprotein beta-1,6-N-acetylglucosaminyltransferase 4 (455 aa).

At 1 to 13 the chain is on the cytoplasmic side; sequence MKIFRCCFKYTLQ. A helical; Signal-anchor for type II membrane protein transmembrane segment spans residues 14 to 34; the sequence is QKLFILLLTLWLFSLLKLLNV. Residues 35–455 lie on the Lumenal side of the membrane; the sequence is GRLLFPQRDI…TEGTRQSHTL (421 aa). Asn73 carries N-linked (GlcNAc...) asparagine glycosylation. Intrachain disulfides connect Cys74/Cys228, Cys162/Cys383, Cys183/Cys210, and Cys392/Cys424. N-linked (GlcNAc...) asparagine glycosylation is found at Asn287 and Asn382.

This sequence belongs to the glycosyltransferase 14 family.

It localises to the golgi apparatus membrane. The catalysed reaction is a 3-O-[beta-D-galactosyl-(1-&gt;3)-N-acetyl-alpha-D-galactosaminyl]-L-seryl-[protein] + UDP-N-acetyl-alpha-D-glucosamine = 3-O-{beta-D-galactosyl-(1-&gt;3)-[N-acetyl-beta-D-glucosaminyl-(1-&gt;6)]-N-acetyl-alpha-D-galactosaminyl}-L-seryl-[protein] + UDP + H(+). It carries out the reaction a 3-O-[beta-D-galactosyl-(1-&gt;3)-N-acetyl-alpha-D-galactosaminyl]-L-threonyl-[protein] + UDP-N-acetyl-alpha-D-glucosamine = a 3-O-{beta-D-galactosyl-(1-&gt;3)-[N-acetyl-beta-D-glucosaminyl-(1-&gt;6)]-N-acetyl-alpha-D-galactosaminyl}-L-threonyl-[protein] + UDP + H(+). It participates in protein modification; protein glycosylation. Functionally, glycosyltransferase that mediates core 2 O-glycan branching, an important step in mucin-type biosynthesis. Does not have core 4 O-glycan or I-branching enzyme activity. The sequence is that of Beta-1,3-galactosyl-O-glycosyl-glycoprotein beta-1,6-N-acetylglucosaminyltransferase 4 (Gcnt4) from Mus musculus (Mouse).